Reading from the N-terminus, the 473-residue chain is Serine incorporator 3 (473 aa).

Residues M1–K96 are Extracellular-facing. A glycan (N-linked (GlcNAc...) asparagine) is linked at N34. The helical transmembrane segment at A97–F117 threads the bilayer. Topologically, residues K118 to G132 are cytoplasmic. Residues F133–G153 traverse the membrane as a helical segment. The Extracellular segment spans residues G154–V159. A helical transmembrane segment spans residues W160–V180. The Cytoplasmic portion of the chain corresponds to D181 to Y203. A helical transmembrane segment spans residues A204–L224. The Extracellular segment spans residues Y225–F239. The chain crosses the membrane as a helical span at residues F240 to I260. Over Q261–S329 the chain is Cytoplasmic. Residues G330–Y350 form a helical membrane-spanning segment. At S351 to S406 the chain is on the extracellular side. Phosphoserine is present on S371. Residues L407–Y427 form a helical membrane-spanning segment. The Cytoplasmic segment spans residues S428 to K446. The helical transmembrane segment at I447–L467 threads the bilayer. The Extracellular segment spans residues T468–S473.

It belongs to the TDE1 family. In terms of processing, N-glycosylated. Ubiquitous. Expression levels were increased fourfold to tenfold in lung tumor tissues compared with normal pulmonary tissues.

It localises to the cell membrane. The protein resides in the golgi apparatus membrane. It is found in the cytoplasm. The protein localises to the perinuclear region. It catalyses the reaction a 1,2-diacyl-sn-glycero-3-phospho-L-serine(in) = a 1,2-diacyl-sn-glycero-3-phospho-L-serine(out). The enzyme catalyses a 1,2-diacyl-sn-glycero-3-phosphocholine(in) = a 1,2-diacyl-sn-glycero-3-phosphocholine(out). The catalysed reaction is a 1,2-diacyl-sn-glycero-3-phosphoethanolamine(in) = a 1,2-diacyl-sn-glycero-3-phosphoethanolamine(out). Restriction factor required to restrict infectivity of lentiviruses, such as HIV-1: acts by inhibiting an early step of viral infection. Impairs the penetration of the viral particle into the cytoplasm. Non-ATP-dependent, non-specific lipid transporter for phosphatidylserine, phosphatidylcholine, and phosphatidylethanolamine. Functions as a scramblase that flips lipids in both directions across the membrane. Phospholipid scrambling results in HIV-1 surface exposure of phosphatidylserine and loss of membrane asymmetry, which leads to changes in HIV-1 Env conformation and loss of infectivity. The protein is Serine incorporator 3 of Homo sapiens (Human).